A 512-amino-acid chain; its full sequence is Ferredoxin--nitrite reductase (512 aa).

Cys-396, Cys-402, Cys-437, and Cys-441 together coordinate [4Fe-4S] cluster. Cys-441 is a siroheme binding site.

The protein belongs to the nitrite and sulfite reductase 4Fe-4S domain family.

It carries out the reaction 6 oxidized [2Fe-2S]-[ferredoxin] + NH4(+) + 2 H2O = nitrite + 6 reduced [2Fe-2S]-[ferredoxin] + 8 H(+). The chain is Ferredoxin--nitrite reductase (nirA) from Synechococcus elongatus (strain ATCC 33912 / PCC 7942 / FACHB-805) (Anacystis nidulans R2).